The primary structure comprises 677 residues: DNA ligase (677 aa).

Residues 34 to 38, 84 to 85, and Glu-118 contribute to the NAD(+) site; these read DAQYD and SL. The active-site N6-AMP-lysine intermediate is Lys-120. NAD(+) contacts are provided by Arg-141, Glu-176, Lys-283, and Lys-307. The Zn(2+) site is built by Cys-403, Cys-406, Cys-421, and Cys-427. The region spanning 594–677 is the BRCT domain; it reads ETASPISGKT…DLLKTVSNSE (84 aa).

The protein belongs to the NAD-dependent DNA ligase family. LigA subfamily. Mg(2+) is required as a cofactor. The cofactor is Mn(2+).

It carries out the reaction NAD(+) + (deoxyribonucleotide)n-3'-hydroxyl + 5'-phospho-(deoxyribonucleotide)m = (deoxyribonucleotide)n+m + AMP + beta-nicotinamide D-nucleotide.. In terms of biological role, DNA ligase that catalyzes the formation of phosphodiester linkages between 5'-phosphoryl and 3'-hydroxyl groups in double-stranded DNA using NAD as a coenzyme and as the energy source for the reaction. It is essential for DNA replication and repair of damaged DNA. This chain is DNA ligase, found in Anaplasma phagocytophilum (strain HZ).